A 500-amino-acid polypeptide reads, in one-letter code: Squalene epoxidase ERG1 (500 aa).

The helical transmembrane segment at E20–A40 threads the bilayer. FAD contacts are provided by residues V30–F31, E50–R51, R58, R145, D332, and M345. The next 2 membrane-spanning stretches (helical) occupy residues A450–F470 and L474–M494.

Belongs to the squalene monooxygenase family. FAD is required as a cofactor.

Its subcellular location is the microsome membrane. The protein localises to the endoplasmic reticulum membrane. The protein resides in the lipid droplet. It carries out the reaction squalene + reduced [NADPH--hemoprotein reductase] + O2 = (S)-2,3-epoxysqualene + oxidized [NADPH--hemoprotein reductase] + H2O + H(+). The protein operates within terpene metabolism; lanosterol biosynthesis; lanosterol from farnesyl diphosphate: step 2/3. It participates in steroid metabolism; ergosterol biosynthesis. Squalene epoxidase; part of the third module of ergosterol biosynthesis pathway that includes the late steps of the pathway. ERG1 catalyzes the epoxidation of squalene into 2,3-epoxysqualene. The third module or late pathway involves the ergosterol synthesis itself through consecutive reactions that mainly occur in the endoplasmic reticulum (ER) membrane. Firstly, the squalene synthase ERG9 catalyzes the condensation of 2 farnesyl pyrophosphate moieties to form squalene, which is the precursor of all steroids. Squalene synthase is crucial for balancing the incorporation of farnesyl diphosphate (FPP) into sterol and nonsterol isoprene synthesis. Secondly, squalene is converted into lanosterol by the consecutive action of the squalene epoxidase ERG1 and the lanosterol synthase ERG7. Then, the delta(24)-sterol C-methyltransferase ERG6 methylates lanosterol at C-24 to produce eburicol. Eburicol is the substrate of the sterol 14-alpha demethylase encoded by CYP51A, CYP51B and CYP51C, to yield 4,4,24-trimethyl ergosta-8,14,24(28)-trienol. CYP51B encodes the enzyme primarily responsible for sterol 14-alpha-demethylation, and plays an essential role in ascospore formation. CYP51A encodes an additional sterol 14-alpha-demethylase, induced on ergosterol depletion and responsible for the intrinsic variation in azole sensitivity. The third CYP51 isoform, CYP51C, does not encode a sterol 14-alpha-demethylase, but is required for full virulence on host wheat ears. The C-14 reductase ERG24 then reduces the C14=C15 double bond which leads to 4,4-dimethylfecosterol. A sequence of further demethylations at C-4, involving the C-4 demethylation complex containing the C-4 methylsterol oxidases ERG25, the sterol-4-alpha-carboxylate 3-dehydrogenase ERG26 and the 3-keto-steroid reductase ERG27, leads to the production of fecosterol via 4-methylfecosterol. ERG28 has a role as a scaffold to help anchor ERG25, ERG26 and ERG27 to the endoplasmic reticulum. The C-8 sterol isomerase ERG2 then catalyzes the reaction which results in unsaturation at C-7 in the B ring of sterols and thus converts fecosterol to episterol. The sterol-C5-desaturases ERG3A and ERG3BB then catalyze the introduction of a C-5 double bond in the B ring to produce 5-dehydroepisterol. The C-22 sterol desaturases ERG5A and ERG5B further convert 5-dehydroepisterol into ergosta-5,7,22,24(28)-tetraen-3beta-ol by forming the C-22(23) double bond in the sterol side chain. Finally, ergosta-5,7,22,24(28)-tetraen-3beta-ol is substrate of the C-24(28) sterol reductase ERG4 to produce ergosterol. The protein is Squalene epoxidase ERG1 of Gibberella zeae (strain ATCC MYA-4620 / CBS 123657 / FGSC 9075 / NRRL 31084 / PH-1) (Wheat head blight fungus).